Here is a 324-residue protein sequence, read N- to C-terminus: MQKISPSESLFIQQGVENNIRSDGRNRVDYRNFAIETGEIIHANGSARVKLSQTEVLVGVKAEITHIQSEITSNLQQSDTSKRLVFSVNCCPSASPEFEGKGSEFLNIELSKQLERLYSHPNVIKNLKLTNPIISNNNNNNNKIKEAEEGKEKEKEGDIITNSGDDNCFSIVSGKYYWTLYVDAIVLDSDGNLFDALSIACRSALQNTRIPRVKAIQGEYEEITFEVSDDPEDTLSLSIDNVPICVTLTKIGNQFVIDTTLQEELCMNARLTVGVNSLANICSIQKGGIDGLDPTTINQMINTAKVVGVKILNIMDKTLKEISN.

It belongs to the RNase PH family. As to quaternary structure, component of the RNA exosome complex.

It localises to the nucleus. The protein localises to the nucleolus. It is found in the cytoplasm. Functionally, non-catalytic component of the RNA exosome complex which has 3'-&gt;5' exoribonuclease activity and participates in a multitude of cellular RNA processing and degradation events. This chain is Putative exosome complex exonuclease RRP42 (exosc7), found in Dictyostelium discoideum (Social amoeba).